The chain runs to 405 residues: Arginine biosynthesis bifunctional protein ArgJ (405 aa).

Substrate-binding residues include Thr-152, Lys-178, Thr-189, Glu-276, Asn-400, and Thr-405. The Nucleophile role is filled by Thr-189.

It belongs to the ArgJ family. As to quaternary structure, heterotetramer of two alpha and two beta chains.

The protein resides in the cytoplasm. The enzyme catalyses N(2)-acetyl-L-ornithine + L-glutamate = N-acetyl-L-glutamate + L-ornithine. It catalyses the reaction L-glutamate + acetyl-CoA = N-acetyl-L-glutamate + CoA + H(+). It functions in the pathway amino-acid biosynthesis; L-arginine biosynthesis; L-ornithine and N-acetyl-L-glutamate from L-glutamate and N(2)-acetyl-L-ornithine (cyclic): step 1/1. The protein operates within amino-acid biosynthesis; L-arginine biosynthesis; N(2)-acetyl-L-ornithine from L-glutamate: step 1/4. In terms of biological role, catalyzes two activities which are involved in the cyclic version of arginine biosynthesis: the synthesis of N-acetylglutamate from glutamate and acetyl-CoA as the acetyl donor, and of ornithine by transacetylation between N(2)-acetylornithine and glutamate. The sequence is that of Arginine biosynthesis bifunctional protein ArgJ from Pseudomonas aeruginosa (strain ATCC 15692 / DSM 22644 / CIP 104116 / JCM 14847 / LMG 12228 / 1C / PRS 101 / PAO1).